The primary structure comprises 192 residues: Elongation factor P (192 aa).

It belongs to the elongation factor P family.

The protein resides in the cytoplasm. It participates in protein biosynthesis; polypeptide chain elongation. Involved in peptide bond synthesis. Stimulates efficient translation and peptide-bond synthesis on native or reconstituted 70S ribosomes in vitro. Probably functions indirectly by altering the affinity of the ribosome for aminoacyl-tRNA, thus increasing their reactivity as acceptors for peptidyl transferase. This Borreliella afzelii (strain PKo) (Borrelia afzelii) protein is Elongation factor P.